The primary structure comprises 361 residues: Myricetin 3-O-methyltransferase 3 (361 aa).

Residue aspartate 229 coordinates S-adenosyl-L-methionine. Histidine 267 (proton acceptor) is an active-site residue.

It belongs to the class I-like SAM-binding methyltransferase superfamily. Cation-independent O-methyltransferase family. In terms of assembly, homodimer. In terms of tissue distribution, mainly expressed in leaves secreting glandular trichomes types 1 and 4 and, to a lesser extent, in storage trichomes type 6.

The enzyme catalyses kaempferol + S-adenosyl-L-methionine = 3-O-methylkaempferol + S-adenosyl-L-homocysteine + H(+). The catalysed reaction is quercetin + S-adenosyl-L-methionine = 3',4',5,7-tetrahydroxy-3-methoxyflavone + S-adenosyl-L-homocysteine + H(+). It carries out the reaction myricetin + S-adenosyl-L-methionine = 3-O-methylmyricetin + S-adenosyl-L-homocysteine + H(+). It catalyses the reaction kaempferide + S-adenosyl-L-methionine = 3,4'-O-dimethylkaempferol + S-adenosyl-L-homocysteine + H(+). The enzyme catalyses isorhamnetin + S-adenosyl-L-methionine = 3,3'-O-dimethylquercetin + S-adenosyl-L-homocysteine + H(+). The catalysed reaction is rhamnetin + S-adenosyl-L-methionine = 3',4',5-trihydroxy-3,7-dimethoxyflavone + S-adenosyl-L-homocysteine + H(+). It carries out the reaction laricitrin + S-adenosyl-L-methionine = 3,3'-O-dimethylmyricetin + S-adenosyl-L-homocysteine + H(+). It catalyses the reaction syringetin + S-adenosyl-L-methionine = 3,3',5'-O-trimethylmyricetin + S-adenosyl-L-homocysteine + H(+). It participates in flavonoid metabolism. Flavonoid 3-O-methyltransferase involved in the biosynthesis of polymethoxylated flavonoids natural products such as myricetin derivatives, aroma compounds possessing antioxidant properties and exhibiting pharmacological activities such as anti-carcinogen, anti-viral, anti-thrombotic, anti-diabetic, anti-atherosclerotic, and anti-inflammatory effects. Catalyzes S-adenosylmethionine-dependent regioselective 3-O-methylation of flavonoids; active on various hydroxylated flavonoid substrates. Active with myricetin, quercetin, kaempferol, 4'-methyl kaempferol (kaempferide), 3'-methyl quercetin (isorhamnetin), 7-methyl quercetin (rhamnetin), 3'-methyl myricetin (laricitrin) and 3',5'-dimethyl myricetin (syringetin), thus producing 3-methyl myricetin, 3-methyl quercetin, 3-methyl kaempferol, 4',3-methyl kaempferol, 3',3-methyl quercetin, 7,3-dimethyl quercetin, 3',3-dimethyl myricetin and 3',5',3-dimethyl myricetin, respectively. Inactive with flavonol substrates methylated at the 3-hydroxyl position such as 3-O-methyl quercetin. The chain is Myricetin 3-O-methyltransferase 3 from Solanum habrochaites (Wild tomato).